A 93-amino-acid polypeptide reads, in one-letter code: Large ribosomal subunit protein uL23 (93 aa).

Belongs to the universal ribosomal protein uL23 family. As to quaternary structure, part of the 50S ribosomal subunit. Contacts protein L29, and trigger factor when it is bound to the ribosome.

Functionally, one of the early assembly proteins it binds 23S rRNA. One of the proteins that surrounds the polypeptide exit tunnel on the outside of the ribosome. Forms the main docking site for trigger factor binding to the ribosome. This Helicobacter pylori (strain P12) protein is Large ribosomal subunit protein uL23.